A 250-amino-acid chain; its full sequence is 3-deoxy-manno-octulosonate cytidylyltransferase (250 aa).

Belongs to the KdsB family.

The protein resides in the cytoplasm. The catalysed reaction is 3-deoxy-alpha-D-manno-oct-2-ulosonate + CTP = CMP-3-deoxy-beta-D-manno-octulosonate + diphosphate. It functions in the pathway nucleotide-sugar biosynthesis; CMP-3-deoxy-D-manno-octulosonate biosynthesis; CMP-3-deoxy-D-manno-octulosonate from 3-deoxy-D-manno-octulosonate and CTP: step 1/1. Its pathway is bacterial outer membrane biogenesis; lipopolysaccharide biosynthesis. Its function is as follows. Activates KDO (a required 8-carbon sugar) for incorporation into bacterial lipopolysaccharide in Gram-negative bacteria. In Yersinia pseudotuberculosis serotype O:1b (strain IP 31758), this protein is 3-deoxy-manno-octulosonate cytidylyltransferase.